A 500-amino-acid chain; its full sequence is Ferulic acid decarboxylase 1 (500 aa).

The Mn(2+) site is built by asparagine 168, histidine 191, and glutamate 233. Prenylated FMN is bound by residues 168 to 173 (NWSIAR), 190 to 191 (QH), and glutamate 233. The active-site Proton donor is the glutamate 282. Lysine 391 is a prenylated FMN binding site.

The protein belongs to the UbiD family. UbiD-like/FDC subfamily. As to quaternary structure, homodimer. May form higher order oligomers. Requires Mn(2+) as cofactor. The cofactor is prenylated FMN.

It is found in the cytoplasm. The enzyme catalyses (E)-4-coumarate + H(+) = 4-vinylphenol + CO2. It catalyses the reaction (E)-cinnamate + H(+) = styrene + CO2. The catalysed reaction is (E)-ferulate + H(+) = 2-methoxy-4-vinylphenol + CO2. In terms of biological role, catalyzes the reversible decarboxylation of aromatic carboxylic acids like ferulic acid, p-coumaric acid or cinnamic acid, producing the corresponding vinyl derivatives 4-vinylphenol, 4-vinylguaiacol, and styrene, respectively, which play the role of aroma metabolites. This is Ferulic acid decarboxylase 1 from Aspergillus niger (strain ATCC MYA-4892 / CBS 513.88 / FGSC A1513).